Reading from the N-terminus, the 236-residue chain is LexA repressor (236 aa).

A DNA-binding region (H-T-H motif) is located at residues 26 to 46; the sequence is FDEMKEALDLRSKSGIHRLIT. Active-site for autocatalytic cleavage activity residues include S157 and K195.

The protein belongs to the peptidase S24 family. Homodimer.

It carries out the reaction Hydrolysis of Ala-|-Gly bond in repressor LexA.. Functionally, represses a number of genes involved in the response to DNA damage (SOS response), including recA and lexA. In the presence of single-stranded DNA, RecA interacts with LexA causing an autocatalytic cleavage which disrupts the DNA-binding part of LexA, leading to derepression of the SOS regulon and eventually DNA repair. The sequence is that of LexA repressor from Azorhizobium caulinodans (strain ATCC 43989 / DSM 5975 / JCM 20966 / LMG 6465 / NBRC 14845 / NCIMB 13405 / ORS 571).